The following is a 421-amino-acid chain: Serine--tRNA ligase (421 aa).

229 to 231 (TSE) contributes to the L-serine binding site. An ATP-binding site is contributed by 260 to 262 (RRE). Glutamate 283 provides a ligand contact to L-serine. 347–350 (EISS) lines the ATP pocket. Residue serine 381 participates in L-serine binding.

The protein belongs to the class-II aminoacyl-tRNA synthetase family. Type-1 seryl-tRNA synthetase subfamily. In terms of assembly, homodimer. The tRNA molecule binds across the dimer.

It is found in the cytoplasm. The enzyme catalyses tRNA(Ser) + L-serine + ATP = L-seryl-tRNA(Ser) + AMP + diphosphate + H(+). It carries out the reaction tRNA(Sec) + L-serine + ATP = L-seryl-tRNA(Sec) + AMP + diphosphate + H(+). Its pathway is aminoacyl-tRNA biosynthesis; selenocysteinyl-tRNA(Sec) biosynthesis; L-seryl-tRNA(Sec) from L-serine and tRNA(Sec): step 1/1. Functionally, catalyzes the attachment of serine to tRNA(Ser). Is also able to aminoacylate tRNA(Sec) with serine, to form the misacylated tRNA L-seryl-tRNA(Sec), which will be further converted into selenocysteinyl-tRNA(Sec). In Fusobacterium nucleatum subsp. nucleatum (strain ATCC 25586 / DSM 15643 / BCRC 10681 / CIP 101130 / JCM 8532 / KCTC 2640 / LMG 13131 / VPI 4355), this protein is Serine--tRNA ligase.